Consider the following 26-residue polypeptide: Acetyl-CoA acetyltransferase (26 aa).

The active-site Acyl-thioester intermediate is cysteine 21.

This sequence belongs to the thiolase-like superfamily. Thiolase family. As to quaternary structure, homotetramer. Post-translationally, succinylation, adjacent to a coenzyme A binding site. Desuccinylated by SIRT5.

It localises to the mitochondrion. The catalysed reaction is 2 acetyl-CoA = acetoacetyl-CoA + CoA. The chain is Acetyl-CoA acetyltransferase from Sus scrofa (Pig).